The primary structure comprises 648 residues: ATPase family AAA domain-containing protein 3B (648 aa).

Disordered stretches follow at residues 1–54 (MSWL…DPTG) and 111–134 (QAEE…QYQD). N-acetylserine is present on Ser-2. Residues 2–246 (SWLFGVNKGP…FRAFVTDRDK (245 aa)) are Mitochondrial intermembrane-facing. Positions 17–26 (GPPPPLPPAQ) are enriched in pro residues. Composition is skewed to basic and acidic residues over residues 32 to 48 (GGDR…DKWS) and 111 to 125 (QAEE…ETRQ). A coiled-coil region spans residues 69 to 214 (RYAKEALNLA…DIIREQIRLK (146 aa)). The segment at residues 247–264 (VTATVAGLTLLAVGVYSA) is an intramembrane region (helical). The Mitochondrial intermembrane segment spans residues 265-648 (KNATAVTGRF…PFCPPGHPLL (384 aa)). 352–359 (GPPGTGKT) contacts ATP. 2 positions are modified to N6-acetyllysine: Lys-427 and Lys-495.

This sequence belongs to the AAA ATPase family. As to quaternary structure, forms heterooligomers with ATAD3A. Interacts with components of the mitochondrial ribosome, including MRPL11 and MRPS18B, and with other proteins involved in mitochondrial RNA metabolism, possibly via interaction with ATAD3A. Interacts with GADD45GIP1. Tends to be down-regulated in differentiated cells and re-expressed in pluripotent stem cells or cancer cells (at protein level).

The protein resides in the mitochondrion inner membrane. May play a role in a mitochondrial network organization typical for stem cells, characterized by reduced mitochondrial metabolism, low mtDNA copies and fragmentated mitochondrial network. May act by suppressing ATAD3A function, interfering with ATAD3A interaction with matrix nucleoid complexes. This Homo sapiens (Human) protein is ATPase family AAA domain-containing protein 3B (ATAD3B).